Here is a 293-residue protein sequence, read N- to C-terminus: Nucleotide-binding protein Csac_1160 (293 aa).

11-18 (GMSGAGKS) provides a ligand contact to ATP. GTP is bound at residue 62 to 65 (DIRG).

The protein belongs to the RapZ-like family.

Its function is as follows. Displays ATPase and GTPase activities. This Caldicellulosiruptor saccharolyticus (strain ATCC 43494 / DSM 8903 / Tp8T 6331) protein is Nucleotide-binding protein Csac_1160.